The following is a 563-amino-acid chain: DEAD-box ATP-dependent RNA helicase 25 (563 aa).

Residues 21 to 57 are disordered; the sequence is KKLTSDEDGSGKLVKDNNKSLKRGREGKSDVDEPLIK. Residues 23 to 56 are compositionally biased toward basic and acidic residues; sequence LTSDEDGSGKLVKDNNKSLKRGREGKSDVDEPLI. S25 bears the Phosphoserine mark. Residues 80–108 carry the Q motif motif; it reads TRFDQFPLSPLTLKGIEDAGFKTMTVVQE. The Helicase ATP-binding domain maps to 111–294; it reads LPLILQGKDI…HVALKRDHEF (184 aa). 124–131 provides a ligand contact to ATP; it reads AKTGTGKT. A DEAD box motif is present at residues 242–245; sequence DEAD. One can recognise a Helicase C-terminal domain in the interval 328–479; the sequence is LLKKHITDNV…AVKKVQKGLI (152 aa).

This sequence belongs to the DEAD box helicase family.

The enzyme catalyses ATP + H2O = ADP + phosphate + H(+). The protein is DEAD-box ATP-dependent RNA helicase 25 (RH25) of Arabidopsis thaliana (Mouse-ear cress).